The following is a 113-amino-acid chain: Small ribosomal subunit protein bS6 (113 aa).

The protein belongs to the bacterial ribosomal protein bS6 family.

Functionally, binds together with bS18 to 16S ribosomal RNA. The sequence is that of Small ribosomal subunit protein bS6 from Ruthia magnifica subsp. Calyptogena magnifica.